The following is a 477-amino-acid chain: Stromelysin-1 (477 aa).

The first 17 residues, 1–17, serve as a signal peptide directing secretion; that stretch reads MKNLPILLLLCVAACSA. Positions 18-99 are cleaved as a propeptide — activation peptide; sequence YPLDRSARDE…SRCGVPDVGH (82 aa). The Cysteine switch signature appears at 90–97; sequence SRCGVPDV. A Zn(2+)-binding site is contributed by Cys92. Asn120 is a glycosylation site (N-linked (GlcNAc...) asparagine). Positions 124 and 158 each coordinate Ca(2+). His168 and Asp170 together coordinate Zn(2+). Residues Asp175, Gly176, Gly178, and Val180 each coordinate Ca(2+). A Zn(2+)-binding site is contributed by His183. 3 residues coordinate Ca(2+): Gly190, Asn192, and Asp194. A Zn(2+)-binding site is contributed by His196. Ca(2+)-binding residues include Asp198, Asp199, and Glu201. His218 serves as a coordination point for Zn(2+). The active site involves Glu219. His222 and His228 together coordinate Zn(2+). Residues 260-285 form a disordered region; that stretch reads QSLYGPPPASPDSPVEPSEPEPPAPG. Hemopexin repeat units follow at residues 287-336, 337-383, 385-433, and 434-477; these read LAMC…WPSL, PSGI…GFPP, VRKI…FPGI, and DSKL…WFNC. An intrachain disulfide couples Cys290 to Cys477. Asp297 is a binding site for Ca(2+). Residues Asp389 and Asp438 each contribute to the Ca(2+) site.

This sequence belongs to the peptidase M10A family. Ca(2+) serves as cofactor. The cofactor is Zn(2+).

It localises to the secreted. The protein resides in the extracellular space. The protein localises to the extracellular matrix. It catalyses the reaction Preferential cleavage where P1', P2' and P3' are hydrophobic residues.. Metalloproteinase with a rather broad substrate specificity that can degrade fibronectin, laminin, gelatins of type I, III, IV, and V; collagens III, IV, X, and IX, and cartilage proteoglycans. Activates different molecules including growth factors, plasminogen or other matrix metalloproteinases such as MMP9. Once released into the extracellular matrix (ECM), the inactive pro-enzyme is activated by the plasmin cascade signaling pathway. Also acts intracellularly. For example, in dopaminergic neurons, gets activated by the serine protease HTRA2 upon stress and plays a pivotal role in DA neuronal degeneration by mediating microglial activation and alpha-synuclein/SNCA cleavage. In addition, plays a role in immune response and possesses antiviral activity against various viruses. Mechanistically, translocates from the cytoplasm into the cell nucleus upon virus infection to influence NF-kappa-B activities. The protein is Stromelysin-1 (MMP3) of Equus caballus (Horse).